A 37-amino-acid polypeptide reads, in one-letter code: Large ribosomal subunit protein bL36 (37 aa).

Belongs to the bacterial ribosomal protein bL36 family.

This chain is Large ribosomal subunit protein bL36, found in Leptospira biflexa serovar Patoc (strain Patoc 1 / Ames).